We begin with the raw amino-acid sequence, 367 residues long: Protein RecA (367 aa).

Residues 1–14 (MSTEVNANQSPNAE) are compositionally biased toward polar residues. The segment at 1-24 (MSTEVNANQSPNAESRQEAARSGE) is disordered. Over residues 15 to 24 (SRQEAARSGE) the composition is skewed to basic and acidic residues. Position 84 to 91 (84 to 91 (GPESSGKT)) interacts with ATP. Residues 348-367 (GSEVSSNSMRPLTTANRKAA) are disordered. The span at 349–367 (SEVSSNSMRPLTTANRKAA) shows a compositional bias: polar residues.

Belongs to the RecA family.

The protein resides in the cytoplasm. Can catalyze the hydrolysis of ATP in the presence of single-stranded DNA, the ATP-dependent uptake of single-stranded DNA by duplex DNA, and the ATP-dependent hybridization of homologous single-stranded DNAs. It interacts with LexA causing its activation and leading to its autocatalytic cleavage. The sequence is that of Protein RecA from Prochlorococcus marinus (strain MIT 9211).